The primary structure comprises 297 residues: MGGVMEKFHGAYVAIITPFINGEVDEQSFVDLIEFQIANGTHGIVPCGTTGESATLSFDEHKQVMDLAIKTVAGRVPVIAGAGANNTLEAIDLSESAKESGADAILSVAPYYNKPSQEGIYQHFKAIAEAVDIPMFLYNVPGRTVVNIAPETTARLAGIDNIIGIKEACGCLEQISDVIRKCPEDFIVLSGDDFTSMPTNVIGGKGVISVISNVFPKGMAEMQEATFAGDWDRARQLHYQMYDMMKQMFAAPSPAPAKKALELMGVIREGLPRIPMTPIDDDNLANLKLAMKGLNLI.

A pyruvate-binding site is contributed by threonine 50. Tyrosine 138 acts as the Proton donor/acceptor in catalysis. The active-site Schiff-base intermediate with substrate is the lysine 166. Isoleucine 208 provides a ligand contact to pyruvate.

This sequence belongs to the DapA family. Homotetramer; dimer of dimers.

The protein resides in the cytoplasm. It catalyses the reaction L-aspartate 4-semialdehyde + pyruvate = (2S,4S)-4-hydroxy-2,3,4,5-tetrahydrodipicolinate + H2O + H(+). The protein operates within amino-acid biosynthesis; L-lysine biosynthesis via DAP pathway; (S)-tetrahydrodipicolinate from L-aspartate: step 3/4. In terms of biological role, catalyzes the condensation of (S)-aspartate-beta-semialdehyde [(S)-ASA] and pyruvate to 4-hydroxy-tetrahydrodipicolinate (HTPA). This is 4-hydroxy-tetrahydrodipicolinate synthase from Desulfotalea psychrophila (strain LSv54 / DSM 12343).